The primary structure comprises 120 residues: MRLPAQLLGLLMLWVPGSSAEIVMTQTPLSLSITPGEQASMSCRSSQSLLHSDGYTYLYWFLQKARPVSTLLIYEVSNRFSGVPDRFSGSGSGTDFTLKISRVEAEDFGVYYCMQDAQDP.

An N-terminal signal peptide occupies residues 1–20 (MRLPAQLLGLLMLWVPGSSA). A framework-1 region spans residues 21–43 (EIVMTQTPLSLSITPGEQASMSC). One can recognise an Ig-like domain in the interval 21 to 120 (EIVMTQTPLS…YYCMQDAQDP (100 aa)). An intrachain disulfide couples cysteine 43 to cysteine 113. A complementarity-determining-1 region spans residues 44-59 (RSSQSLLHSDGYTYLY). A framework-2 region spans residues 60–74 (WFLQKARPVSTLLIY). Residues 75–81 (EVSNRFS) are complementarity-determining-2. Residues 82-113 (GVPDRFSGSGSGTDFTLKISRVEAEDFGVYYC) form a framework-3 region. Positions 114–120 (MQDAQDP) are complementarity-determining-3.

Immunoglobulins are composed of two identical heavy chains and two identical light chains; disulfide-linked.

The protein localises to the secreted. It is found in the cell membrane. V region of the variable domain of immunoglobulin light chains that participates in the antigen recognition. Immunoglobulins, also known as antibodies, are membrane-bound or secreted glycoproteins produced by B lymphocytes. In the recognition phase of humoral immunity, the membrane-bound immunoglobulins serve as receptors which, upon binding of a specific antigen, trigger the clonal expansion and differentiation of B lymphocytes into immunoglobulins-secreting plasma cells. Secreted immunoglobulins mediate the effector phase of humoral immunity, which results in the elimination of bound antigens. The antigen binding site is formed by the variable domain of one heavy chain, together with that of its associated light chain. Thus, each immunoglobulin has two antigen binding sites with remarkable affinity for a particular antigen. The variable domains are assembled by a process called V-(D)-J rearrangement and can then be subjected to somatic hypermutations which, after exposure to antigen and selection, allow affinity maturation for a particular antigen. This is Immunoglobulin kappa variable 2D-26 from Homo sapiens (Human).